The primary structure comprises 345 residues: uncharacterized protein (345 aa).

8 consecutive transmembrane segments (helical) span residues 9 to 31 (VVAF…AAFV), 84 to 103 (TLVA…TYLL), 116 to 138 (YFSL…ILYT), 148 to 170 (VPMQ…SGIF), 182 to 204 (VVFV…TIHA), 269 to 286 (WFFW…GVLG), 291 to 308 (ISHY…IAGY), and 313 to 335 (HGLT…VFFI).

It localises to the cell membrane. This is an uncharacterized protein from Treponema pallidum (strain Nichols).